A 173-amino-acid chain; its full sequence is RNA polymerase sigma factor TcsR (173 aa).

A sigma-70 factor domain-4 region spans residues 122 to 169 (IKDLTQNEKNIIRKIYLDRLRESEISRELNISRQAVNKTHLRALEKLK). The H-T-H motif DNA-binding region spans 143 to 162 (ESEISRELNISRQAVNKTHL).

It belongs to the sigma-70 factor family.

Functionally, sigma factors are initiation factors that promote the attachment of RNA polymerase to specific initiation sites and are then released. Transcriptional regulator specifically required to activate expression of the toxin gene locus, composed of tcsL, tcsH and tcdE/utxA. In Paraclostridium sordellii (Clostridium sordellii), this protein is RNA polymerase sigma factor TcsR.